The sequence spans 87 residues: Small ribosomal subunit protein bS16 (87 aa).

This sequence belongs to the bacterial ribosomal protein bS16 family.

The polypeptide is Small ribosomal subunit protein bS16 (Desulfatibacillum aliphaticivorans).